A 41-amino-acid polypeptide reads, in one-letter code: Large ribosomal subunit protein bL36 (41 aa).

Belongs to the bacterial ribosomal protein bL36 family.

The polypeptide is Large ribosomal subunit protein bL36 (Xylella fastidiosa (strain M23)).